We begin with the raw amino-acid sequence, 60 residues long: Large ribosomal subunit protein bL32 (60 aa).

The disordered stretch occupies residues Met1–Lys21. Positions His7–Tyr20 are enriched in basic residues.

The protein belongs to the bacterial ribosomal protein bL32 family.

The protein is Large ribosomal subunit protein bL32 of Streptococcus thermophilus (strain ATCC BAA-250 / LMG 18311).